The following is a 771-amino-acid chain: Hyperosmolality-gated Ca2+ permeable channel 1.2 (771 aa).

The Extracellular portion of the chain corresponds to 1–4 (MATL). The helical transmembrane segment at 5-27 (QDIGVSAGINILSAFVFFIIFAV) threads the bilayer. At 28–100 (LRLQPFNDRV…AGLDSVVYLR (73 aa)) the chain is on the cytoplasmic side. A helical transmembrane segment spans residues 101–125 (IYWLGLKIFTPIAVLAWAVLVPVNW). Residues 126–156 (TNNTLEMAKQLRNVTSSDIDKLSVSNIPEYS) are Extracellular-facing. A helical membrane pass occupies residues 157-178 (MRFWTHIVMAYAFTIWTCYVLM). At 179-374 (KEYETIANMR…AIPYVSLTVR (196 aa)) the chain is on the cytoplasmic side. The chain crosses the membrane as a helical span at residues 375-401 (RLIMHVAFFFLTFFFIVPIAFVQSLAT). Topologically, residues 402–419 (IEGIVKAAPFLKFIVDDK) are extracellular. The helical transmembrane segment at 420–445 (FMKSVIQGFLPGIALKLFLAFLPSIL) threads the bilayer. The Cytoplasmic portion of the chain corresponds to 446 to 462 (MIMSKFEGFTSISSLER). A helical transmembrane segment spans residues 463–485 (RAAFRYYIFNLVNVFLASVIAGA). Residues 486–504 (AFEQLNSFLNQSANQIPKT) are Extracellular-facing. The helical transmembrane segment at 505–533 (IGVAIPMKATFFITYIMVDGWAGVAGEIL) threads the bilayer. The Cytoplasmic segment spans residues 534–566 (MLKPLIMFHLKNAFLVKTDKDREEAMDPGSIGF). Residues 567-588 (NTGEPRIQLYFLLGLVYAPVTP) form a helical membrane-spanning segment. Position 589 (methionine 589) is a topological domain, extracellular. The helical transmembrane segment at 590–605 (LLPFILVFFALAYIVY) threads the bilayer. The Cytoplasmic portion of the chain corresponds to 606 to 625 (RHQIINVYNQEYESAAAFWP). A helical transmembrane segment spans residues 626–648 (DVHGRVIAALVISQLLLMGLLGT). Over 649-651 (KHA) the chain is Extracellular. The chain crosses the membrane as a helical span at residues 652 to 670 (ALAAPFLIALPVLTIGFHH). The Cytoplasmic portion of the chain corresponds to 671 to 771 (FCKGRYEPAF…PSLPFSGKLV (101 aa)). The tract at residues 741–771 (PTKRQSRRNTPAPSIISGDDSPSLPFSGKLV) is disordered.

Belongs to the CSC1 (TC 1.A.17) family. In terms of assembly, homodimer.

The protein localises to the membrane. Activated by hyperosmotic shock after mannitol or NaCl treatment. Activated by mechanical pressure: activated in response to membrane stretch and poke. Membrane lipids play a key role in mechanosensation by acting as a wall mainly formed by lipid head groups. Acts as an osmosensitive calcium-permeable cation channel. Specifically conducts cations including Ca(2+), K(+) and Na(+) in vitro. Inactivation or closure of the channel is calcium-dependent. Mechanosensitive ion channel that converts mechanical stimuli into a flow of ions: activated in response to membrane stretch and poke. The polypeptide is Hyperosmolality-gated Ca2+ permeable channel 1.2 (Arabidopsis thaliana (Mouse-ear cress)).